The primary structure comprises 172 residues: MIDGDGYRLNVGIVICNNHGQVFWAKRYGQHSWQFPQGGIDDGETPEQAMFRELYEEVGLTHKDVKIIASSRHWLRYKLPKRLVRWDSKPVCIGQKQKWFLLRLECDESKINMQKGSSPEFDGWRWVSYWYPVRQVVSFKRDVYRRAMKEFASLAMPFRERKLKGKKVKRRG.

Positions 6 to 149 constitute a Nudix hydrolase domain; that stretch reads GYRLNVGIVI…KRDVYRRAMK (144 aa). Residues 38–59 carry the Nudix box motif; that stretch reads GGIDDGETPEQAMFRELYEEVG.

This sequence belongs to the Nudix hydrolase family. RppH subfamily. A divalent metal cation serves as cofactor.

Its function is as follows. Accelerates the degradation of transcripts by removing pyrophosphate from the 5'-end of triphosphorylated RNA, leading to a more labile monophosphorylated state that can stimulate subsequent ribonuclease cleavage. The protein is RNA pyrophosphohydrolase of Vibrio vulnificus (strain CMCP6).